Here is a 252-residue protein sequence, read N- to C-terminus: Adenosylcobinamide-GDP ribazoletransferase (252 aa).

The next 6 membrane-spanning stretches (helical) occupy residues 29–49 (LYWF…LGYV), 50–70 (GSLS…GIVL), 104–124 (VGSF…VAVV), 129–149 (FGLF…QVLL), 166–186 (FVAG…LALL), and 194–214 (FPTM…VGMV).

This sequence belongs to the CobS family. Mg(2+) serves as cofactor.

It localises to the cell inner membrane. It carries out the reaction alpha-ribazole + adenosylcob(III)inamide-GDP = adenosylcob(III)alamin + GMP + H(+). It catalyses the reaction alpha-ribazole 5'-phosphate + adenosylcob(III)inamide-GDP = adenosylcob(III)alamin 5'-phosphate + GMP + H(+). It participates in cofactor biosynthesis; adenosylcobalamin biosynthesis; adenosylcobalamin from cob(II)yrinate a,c-diamide: step 7/7. Functionally, joins adenosylcobinamide-GDP and alpha-ribazole to generate adenosylcobalamin (Ado-cobalamin). Also synthesizes adenosylcobalamin 5'-phosphate from adenosylcobinamide-GDP and alpha-ribazole 5'-phosphate. The polypeptide is Adenosylcobinamide-GDP ribazoletransferase (Chlorobium chlorochromatii (strain CaD3)).